We begin with the raw amino-acid sequence, 146 residues long: Hemoglobin subunit beta (146 aa).

Position 1 is an N-acetylvaline (Val1). The Globin domain maps to 2-146; it reads HLTGEEKSAV…VANALAHKYH (145 aa). Residue Thr12 is modified to Phosphothreonine. At Ser44 the chain carries Phosphoserine. Residue Lys59 is modified to N6-acetyllysine. Heme b is bound at residue His63. Lys82 carries the N6-acetyllysine modification. Residue His92 coordinates heme b. Position 93 is an S-nitrosocysteine (Cys93). N6-acetyllysine is present on Lys144.

Belongs to the globin family. As to quaternary structure, heterotetramer of two alpha chains and two beta chains. In terms of tissue distribution, red blood cells.

Its function is as follows. Involved in oxygen transport from the lung to the various peripheral tissues. The sequence is that of Hemoglobin subunit beta (HBB) from Loris tardigradus (Slender loris).